A 339-amino-acid polypeptide reads, in one-letter code: Peroxidase 29 (339 aa).

A signal peptide spans 1 to 28; the sequence is MKPKSKVAESTAASCFLVMSLLCSCIIG. Intrachain disulfides connect C47-C127, C80-C85, C133-C335, and C213-C242. Residue H78 is the Proton acceptor of the active site. The Ca(2+) site is built by D79, V82, G84, D86, and S88. P176 is a substrate binding site. H206 is a binding site for heme b. T207 is a Ca(2+) binding site. N224 carries N-linked (GlcNAc...) asparagine glycosylation. Ca(2+) is bound by residues D260, T262, and D267.

Belongs to the peroxidase family. Classical plant (class III) peroxidase subfamily. Heme b is required as a cofactor. It depends on Ca(2+) as a cofactor.

The protein localises to the secreted. It carries out the reaction 2 a phenolic donor + H2O2 = 2 a phenolic radical donor + 2 H2O. Removal of H(2)O(2), oxidation of toxic reductants, biosynthesis and degradation of lignin, suberization, auxin catabolism, response to environmental stresses such as wounding, pathogen attack and oxidative stress. These functions might be dependent on each isozyme/isoform in each plant tissue. The protein is Peroxidase 29 (PER29) of Arabidopsis thaliana (Mouse-ear cress).